The following is an 877-amino-acid chain: MKLNEIRERFIKFFVNNDHEQVSSSPLIPEHDPTLMFTNAGMVQFKNIFTGAQKTEMKRAVSSQKCLRAGGKHNDLENVGYTTRHHTFFEMLGNFSFGDYFKETAIEFAWEFITKELSLDKNRLSITVYHTDDEAYEIWRKISGFSSDKIIRITTDDNFWSMGSTGPCGPCSEIFYDHGSPNLQEGDRIVEIWNLVFMEFNKDEEGNLHKLPKKCIDTGMGLERIAAVMQNVHDNYDIDLFSALISKSQEYCGRTENKIAHKIIADHLRAAAFLIAEGVLPGNEGRNYVLRRLIRRATRYIHLLGYNDSLLHRIFPVLIDSTSSAYMGAELVRAKSLIETTLKSEEENFKDTLMKGINLLEKFTTDLKSGDTLPGESAFKLYDTYGFPLDITLDVLKEKKINFDQKGFDDAMGEQKERARAKWAGSGEKSVEQVWFDLINKFGKTKFVGYEFNEVSDAKILAIVSSKNEVIDSAKEGEKITIILDKTPFYGESGGQVGDTGSLIKSDRSIIIVENTNKVNDLYLHRCIVKFGSICKGNTVAASIDKERRQTLRRNHSATHLLHFTLRKILGDHVTQKGSLVAPDRLRFDFSHNTQMTQDQLFWVEDMVNSLIRENLSASTKIQSMNQAIDEGAMALFGEKYGNQVRVVKIGDSRELCGGTHVEHTGEIGLFKIVTESSVAFGVRRIEALTGQEAINYVRDNEINLKKVAEFVKAPVSEITSRLSILSQEHKKSETKIKNLYKKLVSAENIKSTEINGINFISHTFTDIPANVIREFVLQQQKPKTVIAFTATEKDKTVLIIKVSKDLINKISAKELISIAVKKNCGGNAELAQTGCDSNKIDDAITAIYSKITASKHSTSYHHEPSYRRGANKQRDT.

4 residues coordinate Zn(2+): His-556, His-560, Cys-657, and His-661.

It belongs to the class-II aminoacyl-tRNA synthetase family. Requires Zn(2+) as cofactor.

The protein localises to the cytoplasm. The catalysed reaction is tRNA(Ala) + L-alanine + ATP = L-alanyl-tRNA(Ala) + AMP + diphosphate. Catalyzes the attachment of alanine to tRNA(Ala) in a two-step reaction: alanine is first activated by ATP to form Ala-AMP and then transferred to the acceptor end of tRNA(Ala). Also edits incorrectly charged Ser-tRNA(Ala) and Gly-tRNA(Ala) via its editing domain. This is Alanine--tRNA ligase from Wolbachia pipientis wMel.